Here is a 428-residue protein sequence, read N- to C-terminus: Serine--tRNA ligase (428 aa).

235–237 is a binding site for L-serine; that stretch reads TAE. 266 to 268 is an ATP binding site; the sequence is RSE. Glu-289 provides a ligand contact to L-serine. 353–356 contacts ATP; that stretch reads EISS. Residue Ser-389 coordinates L-serine.

Belongs to the class-II aminoacyl-tRNA synthetase family. Type-1 seryl-tRNA synthetase subfamily. Homodimer. The tRNA molecule binds across the dimer.

Its subcellular location is the cytoplasm. The catalysed reaction is tRNA(Ser) + L-serine + ATP = L-seryl-tRNA(Ser) + AMP + diphosphate + H(+). The enzyme catalyses tRNA(Sec) + L-serine + ATP = L-seryl-tRNA(Sec) + AMP + diphosphate + H(+). Its pathway is aminoacyl-tRNA biosynthesis; selenocysteinyl-tRNA(Sec) biosynthesis; L-seryl-tRNA(Sec) from L-serine and tRNA(Sec): step 1/1. Catalyzes the attachment of serine to tRNA(Ser). Is also able to aminoacylate tRNA(Sec) with serine, to form the misacylated tRNA L-seryl-tRNA(Sec), which will be further converted into selenocysteinyl-tRNA(Sec). This is Serine--tRNA ligase from Shewanella piezotolerans (strain WP3 / JCM 13877).